We begin with the raw amino-acid sequence, 1352 residues long: Astrotactin-2 (1352 aa).

The tract at residues 1–31 (MAAAGARRSPGRGLGLRGRPRLGFHPGPPPP) is disordered. The signal sequence occupies residues 1–51 (MAAAGARRSPGRGLGLRGRPRLGFHPGPPPPPPPPLLLLFLLLLPPPPLLA). Over 52–218 (GATAAAASRE…IVEEQMHILH (167 aa)) the chain is Lumenal. Asn-180 is a glycosylation site (N-linked (GlcNAc...) asparagine). A helical membrane pass occupies residues 219 to 239 (ISVMGGLIALLLLLLVFTVAL). The Cytoplasmic portion of the chain corresponds to 240-447 (YAQRRWQKRR…KGLLKSPVNK (208 aa)). 2 disordered regions span residues 308 to 327 (EEEE…DEFG) and 375 to 421 (TPVE…ADDE). The segment covering 383 to 392 (QPASRSSTSA) has biased composition (polar residues). The chain crosses the membrane as a helical span at residues 448 to 468 (TALTLIAVSSCILAMVCGNQM). Residues 469–1352 (SCPLTVKVTL…RNTYGETKGR (884 aa)) are Lumenal-facing. EGF-like domains are found at residues 523–563 (VRDL…HLCV), 664–708 (PVRD…SGCY), and 712–764 (KGID…KSCL). Disulfide bonds link Cys-527–Cys-539, Cys-535–Cys-546, Cys-548–Cys-562, Cys-668–Cys-681, Cys-675–Cys-692, Cys-694–Cys-707, Cys-716–Cys-728, Cys-724–Cys-748, and Cys-750–Cys-763. Residue Asn-796 is glycosylated (N-linked (GlcNAc...) asparagine). 3 disulfide bridges follow: Cys-838–Cys-1000, Cys-929–Cys-990, and Cys-996–Cys-1003. Asn-1033 carries N-linked (GlcNAc...) asparagine glycosylation. Disulfide bonds link Cys-1049–Cys-1060, Cys-1062–Cys-1075, Cys-1149–Cys-1171, Cys-1203–Cys-1290, and Cys-1311–Cys-1334. The region spanning 1079 to 1201 (PQPVLRLSPT…SELSTVTLRT (123 aa)) is the Fibronectin type-III domain.

It belongs to the astrotactin family. Interacts with ASTN1; the interaction is not calcium-dependent. As to expression, detected in cerebellum granule neurons; not detected in astroglia (at protein level). Detected primarily in cerebellum, and at lower levels in brain cortex, olfactory bulb, hindbrain and hippocampus dentate gyrus. Between 6 and 10 days after birth, when granule cell migration occurs in the cerebellum, detected in granule cell precursors in the external germinal layer, the molecular layer, the internal granule layer and in Purkinje neurons. Detected in postmitotic neurons in adult cerebellum.

Its subcellular location is the membrane. It is found in the perikaryon. The protein resides in the cytoplasm. It localises to the cell cortex. The protein localises to the early endosome. Its subcellular location is the late endosome. It is found in the cytoplasmic vesicle. The protein resides in the clathrin-coated vesicle. Mediates recycling of the neuronal cell adhesion molecule ASTN1 to the anterior pole of the cell membrane in migrating neurons. Promotes ASTN1 internalization and intracellular transport of endocytosed ASTN1. Selectively binds inositol-4,5-bisphosphate, inositol-3,4,5-trisphosphate and inositol-1,3,4,5-tetrakisphosphate, suggesting it is recruited to membranes that contain lipids with a phosphoinositide headgroup. This is Astrotactin-2 (Astn2) from Mus musculus (Mouse).